Here is a 184-residue protein sequence, read N- to C-terminus: C-phycoerythrin beta chain (184 aa).

The (2R,3E)-phycoerythrobilin site is built by Cys-48 and Cys-59. Asn-70 bears the N4-methylasparagine mark. (2R,3E)-phycoerythrobilin-binding residues include Cys-80 and Cys-165.

This sequence belongs to the phycobiliprotein family. Heterodimer of an alpha and a beta chain. Contains three covalently linked bilin chromophores.

The protein localises to the cellular thylakoid membrane. Light-harvesting photosynthetic bile pigment-protein from the phycobiliprotein complex. This is C-phycoerythrin beta chain (cpeB) from Microchaete diplosiphon (Fremyella diplosiphon).